Consider the following 658-residue polypeptide: Glycogen debranching enzyme (658 aa).

Asp336 (nucleophile) is an active-site residue. Catalysis depends on Glu371, which acts as the Proton donor. The disordered stretch occupies residues 459 to 484; that stretch reads EANGEENRDGTNSNYSDNHGKEGLGG.

The protein belongs to the glycosyl hydrolase 13 family.

The catalysed reaction is Hydrolysis of (1-&gt;6)-alpha-D-glucosidic linkages to branches with degrees of polymerization of three or four glucose residues in limit dextrin.. The protein operates within glycan degradation; glycogen degradation. Its function is as follows. Removes maltotriose and maltotetraose chains that are attached by 1,6-alpha-linkage to the limit dextrin main chain, generating a debranched limit dextrin. This chain is Glycogen debranching enzyme, found in Salmonella dublin (strain CT_02021853).